The sequence spans 637 residues: uncharacterized protein (637 aa).

The segment at residues 7 to 34 (CDLCRLKKIKCSRGQPRCQTCTLFQADC) is a DNA-binding region (zn(2)-C6 fungal-type). The C2H2-type; degenerate zinc finger occupies 304–327 (SLCRTLCGQACLMAQQLNLHRKQS).

The protein localises to the nucleus. This is an uncharacterized protein from Schizosaccharomyces pombe (strain 972 / ATCC 24843) (Fission yeast).